Reading from the N-terminus, the 897-residue chain is Leucine--tRNA ligase (897 aa).

Residues 49–59 (PYPSGKLHMGH) carry the 'HIGH' region motif. Positions 654-658 (KMSKS) match the 'KMSKS' region motif. K657 serves as a coordination point for ATP.

Belongs to the class-I aminoacyl-tRNA synthetase family.

It localises to the cytoplasm. The catalysed reaction is tRNA(Leu) + L-leucine + ATP = L-leucyl-tRNA(Leu) + AMP + diphosphate. This Methylibium petroleiphilum (strain ATCC BAA-1232 / LMG 22953 / PM1) protein is Leucine--tRNA ligase.